The primary structure comprises 96 residues: MRKYEVMIIIDPTVEERQVDSLMEKYLKVITDEKGTVDNVDVWGKRRLAYDIQKKSEGIYVVVNATCEPATIQELDRLLAIDEKIMRTKVMRPEIH.

This sequence belongs to the bacterial ribosomal protein bS6 family.

Functionally, binds together with bS18 to 16S ribosomal RNA. In Cutibacterium acnes (strain DSM 16379 / KPA171202) (Propionibacterium acnes), this protein is Small ribosomal subunit protein bS6.